The sequence spans 505 residues: Protein DETOXIFICATION 50 (505 aa).

12 consecutive transmembrane segments (helical) span residues 46–66 (LVLT…FLGG), 78–98 (AAAF…MGVE), 121–141 (IILL…MEKI), 155–175 (AHIF…LHPL), 194–214 (IASF…GLGI), 219–239 (LSGV…ICFF), 275–295 (ISVC…GFLL), 305–325 (GILI…SLGV), 344–364 (AAIV…AFTV), 380–400 (IMKL…GNCP), 424–444 (AFYA…GFGF), and 446–466 (GLWL…MAAT).

The protein belongs to the multi antimicrobial extrusion (MATE) (TC 2.A.66.1) family. As to expression, preferentially expressed in rosette leaves. Detected mainly in the vascular tissues and guard cells. Mostly detected at reproductive stages in young anthers, in mature pollens and during pollen germination on the pistil. Also expressed in developing seeds.

Its subcellular location is the cell membrane. The protein localises to the late endosome membrane. In terms of biological role, functions as a multidrug and toxin extrusion transporter in the export of abscisic acid (ABA) in guard cells. Plays a role in ABA-mediated growth inhibition and responses to drought conditions. May act as a negative regulator of hypocotyl cell elongation in the light. This Arabidopsis thaliana (Mouse-ear cress) protein is Protein DETOXIFICATION 50.